The chain runs to 274 residues: Thiazole synthase (274 aa).

Lys111 functions as the Schiff-base intermediate with DXP in the catalytic mechanism. Residues Gly172, 198-199 (AG), and 220-221 (NS) contribute to the 1-deoxy-D-xylulose 5-phosphate site. The tract at residues 251–274 (RLPERAAASPSSPTTGIIAEAKTK) is disordered.

The protein belongs to the ThiG family. In terms of assembly, homotetramer. Forms heterodimers with either ThiH or ThiS.

It is found in the cytoplasm. It carries out the reaction [ThiS sulfur-carrier protein]-C-terminal-Gly-aminoethanethioate + 2-iminoacetate + 1-deoxy-D-xylulose 5-phosphate = [ThiS sulfur-carrier protein]-C-terminal Gly-Gly + 2-[(2R,5Z)-2-carboxy-4-methylthiazol-5(2H)-ylidene]ethyl phosphate + 2 H2O + H(+). It participates in cofactor biosynthesis; thiamine diphosphate biosynthesis. Its function is as follows. Catalyzes the rearrangement of 1-deoxy-D-xylulose 5-phosphate (DXP) to produce the thiazole phosphate moiety of thiamine. Sulfur is provided by the thiocarboxylate moiety of the carrier protein ThiS. In vitro, sulfur can be provided by H(2)S. The polypeptide is Thiazole synthase (Prochlorococcus marinus (strain MIT 9313)).